The following is a 281-amino-acid chain: Nucleotide-binding protein DNO_0399 (281 aa).

Residue 6 to 13 (GMSGAGKS) coordinates ATP. 55-58 (DARN) contacts GTP.

Belongs to the RapZ-like family.

Functionally, displays ATPase and GTPase activities. The polypeptide is Nucleotide-binding protein DNO_0399 (Dichelobacter nodosus (strain VCS1703A)).